The primary structure comprises 912 residues: Rho guanine nucleotide exchange factor 1 (912 aa).

Residues 41-232 enclose the RGSL domain; that stretch reads EQNSQFQSLE…GLYMRHLGVR (192 aa). Residues 248-413 form a disordered region; sequence KVMGNRRSDE…PDTLHSLPKS (166 aa). The span at 283–313 shows a compositional bias: basic and acidic residues; the sequence is DFRHLKAEVDAEKPGATDRKGGVGMPSRDRN. Residues 365-381 show a composition bias toward acidic residues; sequence STDEGAETESPEPGDEG. Phosphoserine occurs at positions 374 and 409. Residues 416 to 605 enclose the DH domain; sequence KRQEVISELL…REILHHVNQA (190 aa). The PH domain maps to 647–760; the sequence is KLVHEGPLTW…WCALITETAG (114 aa). The residue at position 695 (Thr695) is a Phosphothreonine. Tyr738 carries the post-translational modification Phosphotyrosine; by JAK2. Disordered regions lie at residues 763–802 and 841–865; these read KVPA…PADA and AEED…LSPA. A compositionally biased stretch (low complexity) spans 777–789; that stretch reads PSSTREPLLSSSE. Ser863 is subject to Phosphoserine. Positions 865–896 form a coiled coil; sequence ARTQEIQENLLSLEETMKQLEELEEEFCRLRP.

In terms of assembly, interacts with RHOA, GNA12 and GNA13. Homooligomerizes through the coiled coil region. May interact with CCPG1. Interacts with CTNNAL1. Post-translationally, phosphorylated by PKCA. Angiotensin-2 induced Tyr-738 phosphorylation is mediated by JAK2. As to expression, ubiquitously expressed.

Its subcellular location is the cytoplasm. The protein localises to the membrane. Functionally, seems to play a role in the regulation of RhoA GTPase by guanine nucleotide-binding alpha-12 (GNA12) and alpha-13 (GNA13) subunits. Acts as a GTPase-activating protein (GAP) for GNA12 and GNA13, and as guanine nucleotide exchange factor (GEF) for RhoA GTPase. Activated G alpha 13/GNA13 stimulates the RhoGEF activity through interaction with the RGS-like domain. This GEF activity is inhibited by binding to activated GNA12. Mediates angiotensin-2-induced RhoA activation. In lymphoid follicles, may trigger activation of GNA13 as part of S1PR2-dependent signaling pathway that leads to inhibition of germinal center (GC) B cell growth and migration outside the GC niche. The protein is Rho guanine nucleotide exchange factor 1 (ARHGEF1) of Homo sapiens (Human).